Reading from the N-terminus, the 298-residue chain is Acetylglutamate kinase (298 aa).

Substrate contacts are provided by residues 66-67, Arg-88, and Asn-193; that span reads GG.

This sequence belongs to the acetylglutamate kinase family. ArgB subfamily.

The protein resides in the cytoplasm. The enzyme catalyses N-acetyl-L-glutamate + ATP = N-acetyl-L-glutamyl 5-phosphate + ADP. The protein operates within amino-acid biosynthesis; L-arginine biosynthesis; N(2)-acetyl-L-ornithine from L-glutamate: step 2/4. In terms of biological role, catalyzes the ATP-dependent phosphorylation of N-acetyl-L-glutamate. The protein is Acetylglutamate kinase of Methanosphaera stadtmanae (strain ATCC 43021 / DSM 3091 / JCM 11832 / MCB-3).